A 359-amino-acid chain; its full sequence is Olfactory receptor 5T2 (359 aa).

Residues 1 to 64 (MSYSIYKSTV…GFTDNLELQT (64 aa)) are Extracellular-facing. N-linked (GlcNAc...) asparagine glycosylation occurs at N44. A helical membrane pass occupies residues 65–85 (IFFFLFLAIYLFTLMGNLGLI). Topologically, residues 86-93 (LVVIRDSQ) are cytoplasmic. The chain crosses the membrane as a helical span at residues 94 to 114 (LHKPMYYFLSMLSSVDACYSS). The Extracellular portion of the chain corresponds to 115-138 (VITPNMLVDFTTKNKVISFLGCVA). The chain crosses the membrane as a helical span at residues 139 to 159 (QVFLACSFGTTECFLLAAMAY). The Cytoplasmic segment spans residues 160 to 178 (DRYVAIYNPLLYSVSMSPR). The chain crosses the membrane as a helical span at residues 179–199 (VYMPLINASYVAGILHATIHT). Residues 200–235 (VATFSLSFCGANEIRRVFCDIPPLLAISYSDTHTNQ) lie on the Extracellular side of the membrane. The helical transmembrane segment at 236–256 (LLLFYFVGSIELVTILIVLIS) threads the bilayer. Topologically, residues 257–276 (YGLILLAILKMYSAEGRRKV) are cytoplasmic. A helical membrane pass occupies residues 277-297 (FSTCGAHLTGVSIYYGTILFM). The Extracellular segment spans residues 298–310 (YVRPSSSYASDHD). Residues 311-331 (MIVSIFYTIVIPLLNPVIYSL) traverse the membrane as a helical segment. The Cytoplasmic portion of the chain corresponds to 332-359 (RNKDVKDSMKKMFGKNQVINKVYFHTKK).

Belongs to the G-protein coupled receptor 1 family.

The protein resides in the cell membrane. Functionally, odorant receptor. The polypeptide is Olfactory receptor 5T2 (OR5T2) (Homo sapiens (Human)).